Here is a 77-residue protein sequence, read N- to C-terminus: Conotoxin ArMKLT2-022 (77 aa).

Residues 1–22 (MKLTCVLIVAVLFLTACQLIAA) form the signal peptide. A propeptide spanning residues 23 to 46 (DDSRDLKRFSRRKMRDGMLNTKNT) is cleaved from the precursor. Gln-49 bears the Pyrrolidone carboxylic acid mark. Disulfide bonds link Cys-50-Cys-65, Cys-57-Cys-68, and Cys-64-Cys-73.

This sequence belongs to the conotoxin O1 superfamily. In terms of tissue distribution, expressed by the venom duct.

It localises to the secreted. The protein is Conotoxin ArMKLT2-022 of Conus arenatus (Sand-dusted cone).